The following is a 255-amino-acid chain: uncharacterized protein (255 aa).

Residues 1 to 23 (MKRLNKLVLGIIFLFLVISITAG) form the signal peptide. Residue Cys-24 is the site of N-palmitoyl cysteine attachment. A lipid anchor (S-diacylglycerol cysteine) is attached at Cys-24.

Belongs to the staphylococcal tandem lipoprotein family.

The protein localises to the cell membrane. This is an uncharacterized protein from Staphylococcus aureus (strain USA300).